A 60-amino-acid chain; its full sequence is Cytotoxin 5 (60 aa).

4 cysteine pairs are disulfide-bonded: C3–C21, C14–C38, C42–C53, and C54–C59.

This sequence belongs to the three-finger toxin family. Short-chain subfamily. Type IA cytotoxin sub-subfamily. In terms of assembly, monomer in solution; Homodimer and oligomer in the presence of negatively charged lipids forming a pore with a size ranging between 20 and 30 Angstroms. In terms of tissue distribution, expressed by the venom gland.

The protein resides in the secreted. It is found in the target cell membrane. Shows cytolytic activity on many different cells by forming pore in lipid membranes. In vivo, increases heart rate or kills the animal by cardiac arrest. In addition, it binds to heparin with high affinity, interacts with Kv channel-interacting protein 1 (KCNIP1) in a calcium-independent manner, and binds to integrin alpha-V/beta-3 (ITGAV/ITGB3) with moderate affinity. In Naja annulifera (Banded Egyptian cobra), this protein is Cytotoxin 5.